The sequence spans 604 residues: Aspartate--tRNA(Asp/Asn) ligase (604 aa).

Glutamate 169 is an L-aspartate binding site. The segment at 193–196 is aspartate; sequence QLFK. Arginine 215 is an L-aspartate binding site. Residues 215-217 and glutamine 224 each bind ATP; that span reads RDE. Histidine 456 contributes to the L-aspartate binding site. Glutamate 490 is a binding site for ATP. L-aspartate is bound at residue arginine 497. Residue 542–545 coordinates ATP; sequence GWDR. The disordered stretch occupies residues 571-604; the sequence is PLTGAPAPITAQQRKEAGVDAQPEPKQAEAEPEA.

The protein belongs to the class-II aminoacyl-tRNA synthetase family. Type 1 subfamily. Homodimer.

It is found in the cytoplasm. The catalysed reaction is tRNA(Asx) + L-aspartate + ATP = L-aspartyl-tRNA(Asx) + AMP + diphosphate. Functionally, aspartyl-tRNA synthetase with relaxed tRNA specificity since it is able to aspartylate not only its cognate tRNA(Asp) but also tRNA(Asn). Reaction proceeds in two steps: L-aspartate is first activated by ATP to form Asp-AMP and then transferred to the acceptor end of tRNA(Asp/Asn). The chain is Aspartate--tRNA(Asp/Asn) ligase from Micrococcus luteus (strain ATCC 4698 / DSM 20030 / JCM 1464 / CCM 169 / CCUG 5858 / IAM 1056 / NBRC 3333 / NCIMB 9278 / NCTC 2665 / VKM Ac-2230) (Micrococcus lysodeikticus).